The following is a 244-amino-acid chain: Multiple organellar RNA editing factor 3, mitochondrial (244 aa).

The transit peptide at 1–62 (MALISTRRTL…GPCYISTRPK (62 aa)) directs the protein to the mitochondrion. Disordered regions lie at residues 59 to 82 (TRPKTSGSGYSPLNDPSPNWSNRP) and 196 to 244 (YRFT…KPSA). The segment covering 60 to 80 (RPKTSGSGYSPLNDPSPNWSN) has biased composition (polar residues). Positions 210 to 226 (PRYDRRRETMQVERREP) are enriched in basic and acidic residues.

Belongs to the MORF family. Heterodimer with MORF1. Homodimer and heterodimers with MORF8/RIP1, MORF4/RIP4 and MORF5/RIP5.

The protein localises to the mitochondrion. Involved in organellar RNA editing. Required for the processing of RNA editing sites in mitochondria. The chain is Multiple organellar RNA editing factor 3, mitochondrial from Arabidopsis thaliana (Mouse-ear cress).